The chain runs to 362 residues: Endolytic peptidoglycan transglycosylase RlpA (362 aa).

The first 17 residues, 1 to 17 (MRKQWLGICIAAGMLAA), serve as a signal peptide directing secretion. Cys-18 carries the N-palmitoyl cysteine lipid modification. A lipid anchor (S-diacylglycerol cysteine) is attached at Cys-18. The disordered stretch occupies residues 198–276 (PDLSGGAGTS…PSTTPATSPA (79 aa)). Residues 262-276 (PVVTAPSTTPATSPA) are compositionally biased toward low complexity. The region spanning 285 to 361 (QSASGNFMVQ…AQLQSFITTA (77 aa)) is the SPOR domain.

This sequence belongs to the RlpA family.

It is found in the cell membrane. Functionally, lytic transglycosylase with a strong preference for naked glycan strands that lack stem peptides. In Escherichia coli (strain K12), this protein is Endolytic peptidoglycan transglycosylase RlpA.